The primary structure comprises 334 residues: MLKTAIIGASGYTGAELALMVFKHPHLSLSGLYVSENSLDKGKAISELHGSLKGIVDEALQPLVNVNQAAKECDVILLATAHEVSHNLAATFLENGCVVFDLSGAFRVKKEGFYSEFYGFEHQYEAWLDKAVYGLAEWNAEAIAKAQLVAVPGCYPTASQLALKPLVKSELLDKNQWPVINATSGVTGAGRKASLTSSFCEVSLQPYGVFNHRHQPEIAAHLGCDVIFTPHLGNFKRGILATITTKLAKGVTEKEIQEAFETAYTQTPAVRLLENEMPKIQSVEKTPFCDIGWKVQGEHLIVVSAIDNLLKGASSQAMQCINIRFGFPVLTALI.

Residue Cys-154 is part of the active site.

Belongs to the NAGSA dehydrogenase family. Type 1 subfamily.

The protein resides in the cytoplasm. The enzyme catalyses N-acetyl-L-glutamate 5-semialdehyde + phosphate + NADP(+) = N-acetyl-L-glutamyl 5-phosphate + NADPH + H(+). Its pathway is amino-acid biosynthesis; L-arginine biosynthesis; N(2)-acetyl-L-ornithine from L-glutamate: step 3/4. In terms of biological role, catalyzes the NADPH-dependent reduction of N-acetyl-5-glutamyl phosphate to yield N-acetyl-L-glutamate 5-semialdehyde. This Aliivibrio fischeri (strain ATCC 700601 / ES114) (Vibrio fischeri) protein is N-acetyl-gamma-glutamyl-phosphate reductase.